The sequence spans 142 residues: Large ribosomal subunit protein uL13 (142 aa).

It belongs to the universal ribosomal protein uL13 family. Part of the 50S ribosomal subunit.

Its function is as follows. This protein is one of the early assembly proteins of the 50S ribosomal subunit, although it is not seen to bind rRNA by itself. It is important during the early stages of 50S assembly. In Leptothrix cholodnii (strain ATCC 51168 / LMG 8142 / SP-6) (Leptothrix discophora (strain SP-6)), this protein is Large ribosomal subunit protein uL13.